A 495-amino-acid chain; its full sequence is Formin-like protein 17 (495 aa).

The interval 1–92 is disordered; the sequence is MDIRELIDIT…HNLKGQGQTR (92 aa). Pro residues predominate over residues 19 to 29; it reads GPPPPPPPPLL. A compositionally biased stretch (low complexity) spans 30-39; sequence QPHHSALSSS. Residues 86-486 enclose the FH2 domain; that stretch reads KGQGQTRKAN…RAQKEAENEK (401 aa).

This sequence belongs to the formin-like family. Class-II subfamily.

The protein is Formin-like protein 17 (FH17) of Arabidopsis thaliana (Mouse-ear cress).